The primary structure comprises 257 residues: tRNA uridine(34) hydroxylase (257 aa).

Residues 128–222 form the Rhodanese domain; the sequence is NGRRLVMLDA…YFEQVGGEGY (95 aa). C182 acts as the Cysteine persulfide intermediate in catalysis.

The protein belongs to the TrhO family.

The catalysed reaction is uridine(34) in tRNA + AH2 + O2 = 5-hydroxyuridine(34) in tRNA + A + H2O. Its function is as follows. Catalyzes oxygen-dependent 5-hydroxyuridine (ho5U) modification at position 34 in tRNAs. This is tRNA uridine(34) hydroxylase from Xylella fastidiosa (strain 9a5c).